A 528-amino-acid polypeptide reads, in one-letter code: J domain-containing protein APJ1 (528 aa).

One can recognise a J domain in the interval 4-73 (NTSLYDSLNV…RALYDQYGTT (70 aa)). The CR-type zinc finger occupies 193 to 274 (GKTAKLGLNR…CQGLGFIKER (82 aa)). CXXCXGXG motif repeat units follow at residues 206–213 (CSVCDGHG), 218–225 (CTCKTCKG), 246–253 (CADCGGAG), and 262–269 (CQQCQGLG). Positions 485 to 499 (NERDSRKRNNRRFDE) are enriched in basic and acidic residues. Residues 485 to 528 (NERDSRKRNNRRFDESNINNNNETKRNKYSSPVSGFYDHDINGY) are disordered.

The protein resides in the cytoplasm. The protein localises to the nucleus. In terms of biological role, putative chaperone involved in protein folding. Interferes with propagation of [PSI+] prion when overproduced. The chain is J domain-containing protein APJ1 (APJ1) from Saccharomyces cerevisiae (strain ATCC 204508 / S288c) (Baker's yeast).